A 477-amino-acid polypeptide reads, in one-letter code: Mitochondrial adenyl nucleotide antiporter SLC25A24 (477 aa).

Residues 1 to 173 (MLRWLRGFVL…RFWKHSTGID (173 aa)) form a regulatory N-terminal domain region. At 1 to 197 (MLRWLRGFVL…EKKSGQWWRQ (197 aa)) the chain is on the mitochondrial intermembrane side. EF-hand domains are found at residues 19–54 (EPPT…LGIP), 61–85 (EKIF…KYLK), 86–121 (DHEK…LGLT), and 122–157 (ISEQ…NPVT). Ca(2+)-binding residues include D32, N34, D36, V38, E43, D68, N70, D72, K74, E79, D99, N101, D103, K105, E110, D135, D137, T139, T141, and E146. The interval 159-168 (IEEIIRFWKH) is linker region. A C-terminal transmembrane transporter domain region spans residues 174–477 (IGDSLTIPDE…MKQTLGVTQK (304 aa)). 3 Solcar repeats span residues 192-278 (GQWW…YKKL), 286-371 (IGTF…LKSH), and 383-471 (PGVM…MKQT). Residues 198–215 (LLAGGVAGAVSRTSTAPL) form a helical membrane-spanning segment. Over 216–252 (DRLKVMMQVHGSKSAKMNIYGGFQQMVKEGGIRSLWR) the chain is Mitochondrial matrix. Residues 253-272 (GNGTNVIKIAPETAVKFWAY) traverse the membrane as a helical segment. The Mitochondrial intermembrane segment spans residues 273 to 295 (EQYKKLLTEEGQKIGTFERFVSG). The helical transmembrane segment at 296-309 (SMAGATAQTFIYPM) threads the bilayer. Topologically, residues 310-345 (EVLKTRLAVGKTGQYSGMFDCAKKILKYEGMGAFYK) are mitochondrial matrix. An N6-acetyllysine; alternate modification is found at K320. K320 is subject to N6-succinyllysine; alternate. K336 carries the N6-acetyllysine modification. The helical transmembrane segment at 346 to 365 (GYVPNLLGIIPYAGIDLAVY) threads the bilayer. Topologically, residues 366–388 (ELLKSHWLDNFAKDSVNPGVMVL) are mitochondrial intermembrane. A helical membrane pass occupies residues 389–406 (LGCGALSSTCGQLASYPL). Over 407-445 (ALVRTRMQAQAMIEKSPQLNMVGLFRRILSKEGLPGLYR) the chain is Mitochondrial matrix. Residue K437 is modified to N6-acetyllysine; alternate. An N6-succinyllysine; alternate modification is found at K437. The helical transmembrane segment at 446–465 (GITPNFMKVLPAVGISYVVY) threads the bilayer. The Mitochondrial intermembrane portion of the chain corresponds to 466–477 (ENMKQTLGVTQK).

Belongs to the mitochondrial carrier (TC 2.A.29) family. In terms of assembly, monomer.

It is found in the mitochondrion inner membrane. The catalysed reaction is Mg(2+)(out) + phosphate(in) + ATP(out) = Mg(2+)(in) + phosphate(out) + ATP(in). The enzyme catalyses ADP(out) + phosphate(in) + H(+)(out) = ADP(in) + phosphate(out) + H(+)(in). It carries out the reaction AMP(out) + phosphate(in) = AMP(in) + phosphate(out). It catalyses the reaction phosphate(in) + ATP(out) + 2 H(+)(out) = phosphate(out) + ATP(in) + 2 H(+)(in). The catalysed reaction is dADP(in) + ADP(out) = dADP(out) + ADP(in). The enzyme catalyses Mg(2+)(in) + ADP(out) + ATP(in) + H(+)(out) = Mg(2+)(out) + ADP(in) + ATP(out) + H(+)(in). It carries out the reaction ADP(out) + diphosphate(in) = ADP(in) + diphosphate(out). It catalyses the reaction dAMP(in) + ADP(out) + H(+)(out) = dAMP(out) + ADP(in) + H(+)(in). The catalysed reaction is 3'-AMP(in) + ADP(out) + H(+)(out) = 3'-AMP(out) + ADP(in) + H(+)(in). The enzyme catalyses dAMP(out) + phosphate(in) = dAMP(in) + phosphate(out). It carries out the reaction 3'-AMP(out) + phosphate(in) = 3'-AMP(in) + phosphate(out). It catalyses the reaction dADP(out) + phosphate(in) + H(+)(out) = dADP(in) + phosphate(out) + H(+)(in). Its activity is regulated as follows. Activated by an increase in cytosolic calcium levels that induce a conformational change of the N-terminal regulatory domain, uncapping the channel and allowing transport. Inhibited by bathophenanthroline, mersalyl, p-hydroxymercuribenzoate, bromcresol purple and tannic acid. In terms of biological role, electroneutral antiporter that mediates the transport of adenyl nucleotides through the inner mitochondrial membrane. Originally identified as an ATP-magnesium/inorganic phosphate antiporter, it also acts as a broad specificity adenyl nucleotide antiporter. By regulating the mitochondrial matrix adenyl nucleotide pool could adapt to changing cellular energetic demands and indirectly regulate adenyl nucleotide-dependent metabolic pathways. In vitro, a low activity is also observed with guanyl and pyrimidine nucleotides. May play a role in protecting cells against oxidative stress-induced cell death, by buffering calcium levels in the mitochondrial matrix through the formation of calcium-phosphate precipitates. This chain is Mitochondrial adenyl nucleotide antiporter SLC25A24 (SLC25A24), found in Bos taurus (Bovine).